Reading from the N-terminus, the 127-residue chain is Protein ApaG (127 aa).

An ApaG domain is found at 2 to 127 (SELVEHIQVH…FRLAGPNQVH (126 aa)).

In Chromohalobacter salexigens (strain ATCC BAA-138 / DSM 3043 / CIP 106854 / NCIMB 13768 / 1H11), this protein is Protein ApaG.